A 467-amino-acid chain; its full sequence is Cysteine--tRNA ligase (467 aa).

C29 is a binding site for Zn(2+). Positions P31 to H41 match the 'HIGH' region motif. The segment at K155–E174 is disordered. The span at G158–E174 shows a compositional bias: basic and acidic residues. Zn(2+) is bound by residues C210, H239, and E243. The 'KMSKS' region signature appears at K271–S275. Position 274 (K274) interacts with ATP.

This sequence belongs to the class-I aminoacyl-tRNA synthetase family. Monomer. The cofactor is Zn(2+).

Its subcellular location is the cytoplasm. The catalysed reaction is tRNA(Cys) + L-cysteine + ATP = L-cysteinyl-tRNA(Cys) + AMP + diphosphate. In Wolinella succinogenes (strain ATCC 29543 / DSM 1740 / CCUG 13145 / JCM 31913 / LMG 7466 / NCTC 11488 / FDC 602W) (Vibrio succinogenes), this protein is Cysteine--tRNA ligase.